Reading from the N-terminus, the 597-residue chain is Uptake hydrogenase large subunit (597 aa).

Ni(2+) contacts are provided by Cys75, Cys78, Cys576, and Cys579.

The protein belongs to the [NiFe]/[NiFeSe] hydrogenase large subunit family. In terms of assembly, heterodimer of a large and a small subunit. Ni(2+) is required as a cofactor.

Its subcellular location is the cell membrane. It carries out the reaction H2 + A = AH2. Its function is as follows. This enzyme recycles the H(2) produced by nitrogenase to increase the production of ATP and to protect nitrogenase against inhibition or damage by O(2) under carbon- or phosphate-limited conditions. This Rhodobacter capsulatus (Rhodopseudomonas capsulata) protein is Uptake hydrogenase large subunit (hupB).